A 298-amino-acid polypeptide reads, in one-letter code: Isochorismatase domain-containing protein 1 (298 aa).

Tyr160 carries the post-translational modification Phosphotyrosine. At Lys279 the chain carries N6-succinyllysine.

This sequence belongs to the isochorismatase family.

The chain is Isochorismatase domain-containing protein 1 (ISOC1) from Homo sapiens (Human).